The primary structure comprises 355 residues: Uroporphyrinogen decarboxylase (355 aa).

Substrate-binding positions include 27–31, Asp78, Tyr155, Thr210, and His328; that span reads RQAGR.

The protein belongs to the uroporphyrinogen decarboxylase family. As to quaternary structure, homodimer.

It localises to the cytoplasm. It catalyses the reaction uroporphyrinogen III + 4 H(+) = coproporphyrinogen III + 4 CO2. It functions in the pathway porphyrin-containing compound metabolism; protoporphyrin-IX biosynthesis; coproporphyrinogen-III from 5-aminolevulinate: step 4/4. In terms of biological role, catalyzes the decarboxylation of four acetate groups of uroporphyrinogen-III to yield coproporphyrinogen-III. This chain is Uroporphyrinogen decarboxylase, found in Pseudomonas fluorescens (strain Pf0-1).